The sequence spans 429 residues: Citrate synthase, chromosomal (429 aa).

Active-site residues include His-306 and Asp-364.

The protein belongs to the citrate synthase family.

The enzyme catalyses oxaloacetate + acetyl-CoA + H2O = citrate + CoA + H(+). Its pathway is carbohydrate metabolism; tricarboxylic acid cycle; isocitrate from oxaloacetate: step 1/2. This chain is Citrate synthase, chromosomal (ccsA), found in Rhizobium tropici.